The chain runs to 1951 residues: Sodium channel protein type 3 subunit alpha (1951 aa).

The Cytoplasmic segment spans residues 1-128 (MAQALLVPPG…KIAIKILVHS (128 aa)). The disordered stretch occupies residues 28–60 (RAAEEKAKKPKKEQDIDDENKPKPNSDLEAGKN). Basic and acidic residues predominate over residues 46–57 (ENKPKPNSDLEA). The I repeat unit spans residues 110 to 455 (ILTPLNPVRK…QQMLEQLKKQ (346 aa)). Residues 129–146 (LFSMLIMCTILTNCVFMT) form a helical membrane-spanning segment. Residues 147–152 (LSNPPD) lie on the Extracellular side of the membrane. A helical membrane pass occupies residues 153–174 (WTKNVEYTFTGIYTFESLIKIL). Over 175 to 188 (ARGFCLEDFTFLRD) the chain is Cytoplasmic. A helical membrane pass occupies residues 189 to 206 (PWNWLDFSVIVMAYVTEF). The Extracellular portion of the chain corresponds to 207-213 (VDLGNVS). N-linked (GlcNAc...) asparagine glycosylation is present at Asn-211. The helical transmembrane segment at 214–235 (ALRTFRVLRALKTISVIPGLKT) threads the bilayer. At 236–249 (IVGALIQSVKKLSD) the chain is on the cytoplasmic side. A helical transmembrane segment spans residues 250–269 (VMILTVFCLSVFALIGLQLF). Residues 270–369 (MGNLRNKCSQ…NYGYTSFDTF (100 aa)) are Extracellular-facing. Asn-290, Asn-296, Asn-302, Asn-307, and Asn-339 each carry an N-linked (GlcNAc...) asparagine glycan. The segment at residues 370–386 (SWAFLSLFRLMTQDYWE) is an intramembrane region (pore-forming). The Extracellular portion of the chain corresponds to 387-397 (NLYQLTLRAAG). Residues 398 to 424 (KTYMIFFVLVIFLGSFYLVNLILAVVA) traverse the membrane as a helical segment. The Cytoplasmic segment spans residues 425 to 712 (MAYEEQNQAT…LVNLIVMDPF (288 aa)). Ser-484, Ser-485, and Ser-486 each carry phosphoserine. Disordered regions lie at residues 493-529 (SKSA…SESE) and 587-633 (VGSE…TEVR). Positions 500 to 509 (RNRRKKRRQR) are enriched in basic residues. 2 stretches are compositionally biased toward basic and acidic residues: residues 510-529 (EHLE…SESE) and 596-622 (DEHS…ERRN). The stretch at 693–965 (CCDAWLKVKH…QIAVGRMQKG (273 aa)) is one II repeat. Residues 713–730 (VDLAITICIVLNTLFMAM) traverse the membrane as a helical segment. Topologically, residues 731–738 (EHYPMTQQ) are extracellular. The helical transmembrane segment at 739–763 (FSSVLTVGNLVFTGIFTAEMVLKII) threads the bilayer. The Cytoplasmic segment spans residues 764–773 (AMDPYYYFQE). A helical membrane pass occupies residues 774–793 (GWNIFDGIIVSLSLMELGLA). Topologically, residues 794 to 797 (NVEG) are extracellular. A helical membrane pass occupies residues 798–816 (LSVLRSFRLLRVFKLAKSW). Residues 817–834 (PTLNMLIKIIGNSVGALG) lie on the Cytoplasmic side of the membrane. Residues 835 to 855 (NLTLVLAIIVFIFAVVGMQLF) form a helical membrane-spanning segment. The Extracellular segment spans residues 856 to 880 (GKSYKECVCKINVDCKLPRWHMNDF). An intrachain disulfide couples Cys-864 to Cys-870. Residues 881–896 (FHSFLIVFRVLCGEWI) constitute an intramembrane region (pore-forming). The Extracellular segment spans residues 897 to 907 (ETMWDCMEVAG). An intrachain disulfide couples Cys-902 to Cys-911. The helical transmembrane segment at 908–934 (QTMCLIVFMLVMVIGNLVVLNLFLALL) threads the bilayer. Topologically, residues 935-1156 (LSSFSSDNLA…RKTCYSIVEH (222 aa)) are cytoplasmic. The interval 1068 to 1112 (TEEFSSESELEESKEKLNATSSSEGSTVDVAPPREGEQAEIEPEE) is disordered. The stretch at 1139–1450 (KGKIWWNLRK…KKYYNAMKKL (312 aa)) is one III repeat. A helical transmembrane segment spans residues 1157 to 1177 (NWFETFIVFMILLSSGALAFE). At 1178–1189 (DIYIEQRKTIKT) the chain is on the extracellular side. The chain crosses the membrane as a helical span at residues 1190 to 1211 (MLEYADKVFTYIFILEMLLKWV). Residues 1212–1217 (AYGFQT) lie on the Cytoplasmic side of the membrane. The chain crosses the membrane as a helical span at residues 1218-1243 (YFTNAWCWLDFLIVDVSLVSLVANAL). The Extracellular portion of the chain corresponds to 1244 to 1252 (GYSELGAIK). A helical transmembrane segment spans residues 1253-1271 (SLRTLRALRPLRALSRFEG). The Cytoplasmic portion of the chain corresponds to 1272 to 1284 (MRVVVNALVGAIP). A helical transmembrane segment spans residues 1285–1307 (SIMNVLLVCLIFWLIFSIMGVNL). Residues 1308 to 1353 (FAGKFYHCVNTTTGNMFEIKEVNNFSDCQALGKQARWKNVKVNFDN) are Extracellular-facing. Cys-1315 and Cys-1335 are oxidised to a cystine. N-linked (GlcNAc...) asparagine glycosylation is found at Asn-1317 and Asn-1331. Residues 1354 to 1370 (VGAGYLALLQVATFKGW) constitute an intramembrane region (pore-forming). Topologically, residues 1371–1393 (MDIMYAAVDSRDVKLQPIYEENL) are extracellular. Residues 1394 to 1419 (YMYLYFVIFIIFGSFFTLNLFIGVII) form a helical membrane-spanning segment. At 1420–1477 (DNFNQQKKKFGGQDIFMTEEQKKYYNAMKKLGSKKPQKPIPRPANKFQGMVFDFVTRQ) the chain is on the cytoplasmic side. Ser-1452 is modified (phosphoserine; by PKC). One copy of the IV repeat lies at 1459 to 1757 (IPRPANKFQG…WEKFDPDATQ (299 aa)). The chain crosses the membrane as a helical span at residues 1478-1496 (VFDISIMILICLNMVTMMV). The Extracellular portion of the chain corresponds to 1497-1504 (ETDDQSKY). The helical transmembrane segment at 1505-1528 (MTLVLSRINLVFIVLFTGEFLLKL) threads the bilayer. The Cytoplasmic segment spans residues 1529-1538 (ISLRYYYFTI). A helical membrane pass occupies residues 1539-1556 (GWNIFDFVVVILSIVGMF). The Extracellular portion of the chain corresponds to 1557–1568 (LAELIEKYFVSP). The chain crosses the membrane as a helical span at residues 1569–1591 (TLFRVIRLARIGRILRLIKGAKG). Residues 1592 to 1604 (IRTLLFALMMSLP) are Cytoplasmic-facing. A helical membrane pass occupies residues 1605-1628 (ALFNIGLLLFLVMFIYAIFGMSNF). Residues 1629-1650 (AYVKKEAGIDDMFNFETFGNSM) lie on the Extracellular side of the membrane. An intramembrane region (pore-forming) is located at residues 1651 to 1663 (ICLFQITTSAGWD). The Extracellular portion of the chain corresponds to 1664–1695 (GLLAPILNSAPPDCDPDAIHPGSSVKGDCGNP). A helical transmembrane segment spans residues 1696–1721 (SVGIFFFVSYIIISFLVVVNMYIAVI). The Cytoplasmic segment spans residues 1722–1951 (LENFSVATEE…KGKEVRENQK (230 aa)). The region spanning 1851-1880 (EEVSAAIIQRNYRCYLLKQRLKNISSKYDK) is the IQ domain. The tract at residues 1898–1951 (DKLNGNSTPEKTDGSSSTTSPPSYDSVTKPDKEKFEKDKPEKEIKGKEVRENQK) is disordered. Positions 1925–1951 (TKPDKEKFEKDKPEKEIKGKEVRENQK) are enriched in basic and acidic residues.

The protein belongs to the sodium channel (TC 1.A.1.10) family. Nav1.3/SCN3A subfamily. In terms of assembly, heterooligomer of an alpha subunit, SCN3A, and 1 to 3 regulatory beta subunits including SCN1B and SCN2B; disulfide-linked with some beta subunits like SCN2B. Interacts with NEDD4L; could regulate expression of SCN3A at the plasma membrane through ubiquitination-regulated endocytosis. Interacts with the conotoxin GVIIJ. Interacts with the spider beta/delta-theraphotoxin-Pre1a. Interacts with the spider RTX-VII toxin (AC P0DL75). May be ubiquitinated by NEDD4L; which would promote its endocytosis. In terms of processing, phosphorylation at Ser-1452 by PKC in a highly conserved cytoplasmic loop slows inactivation of the sodium channel and reduces peak sodium currents.

Its subcellular location is the cell membrane. The protein localises to the basal cell membrane. The catalysed reaction is Na(+)(in) = Na(+)(out). Pore-forming subunit of Nav1.3, a voltage-gated sodium (Nav) channel that directly mediates the depolarizing phase of action potentials in excitable membranes. Navs, also called VGSCs (voltage-gated sodium channels) or VDSCs (voltage-dependent sodium channels), operate by switching between closed and open conformations depending on the voltage difference across the membrane. In the open conformation they allow Na(+) ions to selectively pass through the pore, along their electrochemical gradient. The influx of Na+ ions provokes membrane depolarization, initiating the propagation of electrical signals throughout cells and tissues. In some secretory cell types, it also participates in cell excitability through membrane depolarization and regulates cells responsiveness to stimuli triggering secretion. For instance, it controls the release of serotonin/5-hydroxytryptamine by enterochromaffin cells and is required for both glucagon- and glucose-induced insulin secretion in pancreatic endocrine cells. The polypeptide is Sodium channel protein type 3 subunit alpha (Rattus norvegicus (Rat)).